Reading from the N-terminus, the 227-residue chain is Lysosomal-associated transmembrane protein 4B (227 aa).

The next 4 helical transmembrane spans lie at 26–46 (ILLG…LLSA), 72–92 (MCIA…ATYG), 100–120 (WIIP…LVAI), and 153–173 (CLVL…GYLI). The required for NEDD4 interaction stretch occupies residues 205–222 (PPYDDATAVTGTAKEPPP).

The protein belongs to the LAPTM4/LAPTM5 transporter family. Homooligomer; upon reaching the lysosomes. Interacts with MCOLN1. Interacts with NEDD4; may play a role in the lysosomal sorting of LAPTM4B; enhances HGS association with NEDD4; mediates inhibition of EGFR degradation. Interacts with PIP5K1C; promotes SNX5 association with LAPTM4B; kinase activity of PIP5K1C is required; interaction is regulated by phosphatidylinositol 4,5-bisphosphate generated by PIP5K1C. Interacts with HGS; promotes HGS ubiquitination. Interacts with SNX5. Interacts with SLC3A2 and SLC7A5; recruits SLC3A2 and SLC7A5 to lysosomes to promote leucine uptake into these organelles and is required for mTORC1 activation. Interacts with LRRC32; decreases TGFB1 production in regulatory T cells. Interacts with BECN1; competes with EGFR for LAPTM4B binding; regulates EGFR activity. Interacts with EGFR; positively correlates with EGFR activation. In terms of processing, undergoes proteolytic cleavage following delivery to the lysosomes. Ubiquitinated by NEDD4.

The protein resides in the endomembrane system. It is found in the late endosome membrane. Its subcellular location is the cell membrane. It localises to the cell projection. The protein localises to the lysosome membrane. The protein resides in the endosome membrane. It is found in the endosome. Its subcellular location is the multivesicular body membrane. It localises to the multivesicular body lumen. Functionally, required for optimal lysosomal function. Blocks EGF-stimulated EGFR intraluminal sorting and degradation. Conversely by binding with the phosphatidylinositol 4,5-bisphosphate, regulates its PIP5K1C interaction, inhibits HGS ubiquitination and relieves LAPTM4B inhibition of EGFR degradation. Recruits SLC3A2 and SLC7A5 (the Leu transporter) to the lysosome, promoting entry of leucine and other essential amino acid (EAA) into the lysosome, stimulating activation of proton-transporting vacuolar (V)-ATPase protein pump (V-ATPase) and hence mTORC1 activation. Plays a role as negative regulator of TGFB1 production in regulatory T cells. Binds ceramide and facilitates its exit from late endosome in order to control cell death pathways. This chain is Lysosomal-associated transmembrane protein 4B, found in Rattus norvegicus (Rat).